A 332-amino-acid polypeptide reads, in one-letter code: 2,3-diketo-L-gulonate reductase (332 aa).

His44 functions as the Proton donor in the catalytic mechanism. NAD(+)-binding positions include 168–174 (ITMVDMS), 224–225 (WK), and 304–306 (GHE).

The protein belongs to the LDH2/MDH2 oxidoreductase family. DlgD subfamily. As to quaternary structure, homodimer.

The protein resides in the cytoplasm. It catalyses the reaction 3-dehydro-L-gulonate + NAD(+) = 2,3-dioxo-L-gulonate + NADH + H(+). It carries out the reaction 3-dehydro-L-gulonate + NADP(+) = 2,3-dioxo-L-gulonate + NADPH + H(+). Its function is as follows. Catalyzes the reduction of 2,3-diketo-L-gulonate in the presence of NADH, to form 3-keto-L-gulonate. This is 2,3-diketo-L-gulonate reductase from Klebsiella oxytoca.